An 872-amino-acid polypeptide reads, in one-letter code: Alanine--tRNA ligase (872 aa).

Residues histidine 567, histidine 571, cysteine 669, and histidine 673 each contribute to the Zn(2+) site.

The protein belongs to the class-II aminoacyl-tRNA synthetase family. Zn(2+) is required as a cofactor.

The protein localises to the cytoplasm. It catalyses the reaction tRNA(Ala) + L-alanine + ATP = L-alanyl-tRNA(Ala) + AMP + diphosphate. Catalyzes the attachment of alanine to tRNA(Ala) in a two-step reaction: alanine is first activated by ATP to form Ala-AMP and then transferred to the acceptor end of tRNA(Ala). Also edits incorrectly charged Ser-tRNA(Ala) and Gly-tRNA(Ala) via its editing domain. The chain is Alanine--tRNA ligase from Streptococcus pneumoniae serotype 2 (strain D39 / NCTC 7466).